A 413-amino-acid polypeptide reads, in one-letter code: Multifunctional CCA protein (413 aa).

ATP is bound by residues G8 and R11. Positions 8 and 11 each coordinate CTP. Residues D21 and D23 each contribute to the Mg(2+) site. 3 residues coordinate ATP: R91, R143, and R146. CTP-binding residues include R91, R143, and R146. Residues 232–333 (TGVHVMMVVD…VRLFERSDAL (102 aa)) enclose the HD domain.

This sequence belongs to the tRNA nucleotidyltransferase/poly(A) polymerase family. Bacterial CCA-adding enzyme type 1 subfamily. As to quaternary structure, monomer. Can also form homodimers and oligomers. The cofactor is Mg(2+). It depends on Ni(2+) as a cofactor.

The enzyme catalyses a tRNA precursor + 2 CTP + ATP = a tRNA with a 3' CCA end + 3 diphosphate. It catalyses the reaction a tRNA with a 3' CCA end + 2 CTP + ATP = a tRNA with a 3' CCACCA end + 3 diphosphate. In terms of biological role, catalyzes the addition and repair of the essential 3'-terminal CCA sequence in tRNAs without using a nucleic acid template. Adds these three nucleotides in the order of C, C, and A to the tRNA nucleotide-73, using CTP and ATP as substrates and producing inorganic pyrophosphate. tRNA 3'-terminal CCA addition is required both for tRNA processing and repair. Also involved in tRNA surveillance by mediating tandem CCA addition to generate a CCACCA at the 3' terminus of unstable tRNAs. While stable tRNAs receive only 3'-terminal CCA, unstable tRNAs are marked with CCACCA and rapidly degraded. The polypeptide is Multifunctional CCA protein (Burkholderia lata (strain ATCC 17760 / DSM 23089 / LMG 22485 / NCIMB 9086 / R18194 / 383)).